Reading from the N-terminus, the 238-residue chain is Probable transcriptional regulatory protein M6_Spy0297 (238 aa).

This sequence belongs to the TACO1 family. YeeN subfamily.

It localises to the cytoplasm. In Streptococcus pyogenes serotype M6 (strain ATCC BAA-946 / MGAS10394), this protein is Probable transcriptional regulatory protein M6_Spy0297.